Reading from the N-terminus, the 170-residue chain is Cytochrome b6-f complex subunit 4 (170 aa).

3 helical membrane-spanning segments follow: residues 46-66 (LLFM…GLSV), 105-125 (LLGI…PFIE), and 141-161 (TVFL…TLPL).

It belongs to the cytochrome b family. PetD subfamily. In terms of assembly, the 4 large subunits of the cytochrome b6-f complex are cytochrome b6, subunit IV (17 kDa polypeptide, PetD), cytochrome f and the Rieske protein, while the 4 small subunits are PetG, PetL, PetM and PetN. The complex functions as a dimer.

The protein resides in the cellular thylakoid membrane. Functionally, component of the cytochrome b6-f complex, which mediates electron transfer between photosystem II (PSII) and photosystem I (PSI), cyclic electron flow around PSI, and state transitions. This chain is Cytochrome b6-f complex subunit 4, found in Synechococcus sp. (strain JA-2-3B'a(2-13)) (Cyanobacteria bacterium Yellowstone B-Prime).